We begin with the raw amino-acid sequence, 133 residues long: uncharacterized protein (133 aa).

The recombinase DNA-binding region spans 1–82 (MIDKIKKGYS…QKMLHDRQNF (82 aa)).

This is an uncharacterized protein from Bacillus phage phi105 (Bacteriophage phi-105).